Here is a 376-residue protein sequence, read N- to C-terminus: DNA replication and repair protein RecF (376 aa).

Position 35–42 (35–42) interacts with ATP; sequence GDNGSGKT.

This sequence belongs to the RecF family.

Its subcellular location is the cytoplasm. Functionally, the RecF protein is involved in DNA metabolism; it is required for DNA replication and normal SOS inducibility. RecF binds preferentially to single-stranded, linear DNA. It also seems to bind ATP. The polypeptide is DNA replication and repair protein RecF (Agrobacterium fabrum (strain C58 / ATCC 33970) (Agrobacterium tumefaciens (strain C58))).